A 609-amino-acid chain; its full sequence is MLKLLSLMVPLASAAVIHRRDANISAIASEWNSTSNSSSSLSLNRPAVHYSPEEGWMNDPNGLWYDAKEEDWHIYYQYYPDAPHWGLPLTWGHAVSKDLTVWDEQGVAFGPEFETAGAFSGSMVIDYNNTSGFFNSSTDPRQRVVAIWTLDYSGSETQQLSYSHDGGYTFTEYSDNPVLDIDSDAFRDPKVFWYQGEDSESEGNWVMTVAEADRFSVLIYSSPDLKNWTLESNFSREGYLGYNYECPGLVKVPYVKNTTYASAPGSNITSSGPLHPNSTVSFSNSSSIAWNASSVPLNITLSNSTLVDETSQLEEVGYAWVMIVSFNPGSILGGSGTEYFIGDFNGTHFEPLDKQTRFLDLGKDYYALQTFFNTPNEVDVLGIAWASNWQYANQVPTDPWRSSMSLVRNFTITEYNINSNTTALVLNSQPVLDFTSLRKNGTSYTLENLTLNSSSHEVLEFEDPTGVFEFSLEYSVNFTGIHNWVFTDLSLYFQGDKDSDEYLRLGYEANSKQFFLDRGHSNIPFVQENPFFTQRLSVSNPPSSNSSTFDVYGIVDRNIIELYFNNGTVTSTNTFFFSTGNNIGSIIVKSGVDDVYEIESLKVNQFYVD.

An N-terminal signal peptide occupies residues 1–14 (MLKLLSLMVPLASA). 3 N-linked (GlcNAc...) asparagine glycosylation sites follow: Asn23, Asn32, and Asn36. Substrate is bound by residues 56–59 (WMND), Gln77, and 119–120 (FS). Asp59 is an active-site residue. N-linked (GlcNAc...) asparagine glycans are attached at residues Asn128, Asn129, and Asn135. Position 187–188 (187–188 (RD)) interacts with substrate. 2 N-linked (GlcNAc...) asparagine glycosylation sites follow: Asn227 and Asn233. Residue Glu245 coordinates substrate. Residues Asn257, Asn267, Asn277, Asn284, Asn291, Asn298, Asn303, and Asn345 are each glycosylated (N-linked (GlcNAc...) asparagine). Trp389 contacts substrate. 8 N-linked (GlcNAc...) asparagine glycosylation sites follow: Asn409, Asn420, Asn440, Asn448, Asn452, Asn477, Asn545, and Asn566.

It belongs to the glycosyl hydrolase 32 family.

The enzyme catalyses Hydrolysis of terminal non-reducing beta-D-fructofuranoside residues in beta-D-fructofuranosides.. The protein is Invertase (INV1) of Kluyveromyces lactis (strain ATCC 8585 / CBS 2359 / DSM 70799 / NBRC 1267 / NRRL Y-1140 / WM37) (Yeast).